Consider the following 513-residue polypeptide: OTU domain-containing protein 5-A (513 aa).

Disordered regions lie at residues 1–75 (MTIL…GGAG) and 99–136 (GPGH…DEYE). In terms of domain architecture, OTU spans 166–289 (FIIKQMKEDG…NIHYNSVVNP (124 aa)). A cys-loop region spans residues 171–177 (MKEDGAC). Asp-174 is an active-site residue. Cys-177 serves as the catalytic Nucleophile. Residues 226–236 (KRKNNCHGNHI) are variable-loop. Positions 277 to 282 (YHRNIH) are his-loop. Residue His-282 is part of the active site. The segment at 387–446 (LEEWSGRSPRQRSTAGSPEHPDLHAELCMKPPSPGAPLILGKPPSPCAPGPSNQMSTGAD) is disordered.

Belongs to the peptidase C85 family.

The catalysed reaction is Thiol-dependent hydrolysis of ester, thioester, amide, peptide and isopeptide bonds formed by the C-terminal Gly of ubiquitin (a 76-residue protein attached to proteins as an intracellular targeting signal).. Deubiquitinating enzyme that may function as negative regulator of the innate immune system. Has peptidase activity towards 'Lys-48'- and 'Lys-63'-linked polyubiquitin chains. Can also cleave 'Lys-11'-linked ubiquitin chains (in vitro). In Xenopus laevis (African clawed frog), this protein is OTU domain-containing protein 5-A (otud5-a).